Consider the following 402-residue polypeptide: 1-deoxy-D-xylulose 5-phosphate reductoisomerase (402 aa).

8 residues coordinate NADPH: T27, G28, S29, I30, G53, K54, N55, and N140. K141 contacts 1-deoxy-D-xylulose 5-phosphate. NADPH is bound at residue E142. D166 contributes to the Mn(2+) binding site. Positions 167, 168, 192, and 215 each coordinate 1-deoxy-D-xylulose 5-phosphate. Residue E168 participates in Mn(2+) binding. G221 provides a ligand contact to NADPH. 1-deoxy-D-xylulose 5-phosphate-binding residues include S228, N233, K234, and E237. E237 is a Mn(2+) binding site.

Belongs to the DXR family. It depends on Mg(2+) as a cofactor. Mn(2+) is required as a cofactor.

The catalysed reaction is 2-C-methyl-D-erythritol 4-phosphate + NADP(+) = 1-deoxy-D-xylulose 5-phosphate + NADPH + H(+). It functions in the pathway isoprenoid biosynthesis; isopentenyl diphosphate biosynthesis via DXP pathway; isopentenyl diphosphate from 1-deoxy-D-xylulose 5-phosphate: step 1/6. Its function is as follows. Catalyzes the NADPH-dependent rearrangement and reduction of 1-deoxy-D-xylulose-5-phosphate (DXP) to 2-C-methyl-D-erythritol 4-phosphate (MEP). In Lawsonia intracellularis (strain PHE/MN1-00), this protein is 1-deoxy-D-xylulose 5-phosphate reductoisomerase.